The chain runs to 278 residues: Elongation factor Ts (278 aa).

The segment at threonine 82–valine 85 is involved in Mg(2+) ion dislocation from EF-Tu.

The protein belongs to the EF-Ts family.

Its subcellular location is the cytoplasm. Its function is as follows. Associates with the EF-Tu.GDP complex and induces the exchange of GDP to GTP. It remains bound to the aminoacyl-tRNA.EF-Tu.GTP complex up to the GTP hydrolysis stage on the ribosome. This chain is Elongation factor Ts, found in Streptomyces griseus subsp. griseus (strain JCM 4626 / CBS 651.72 / NBRC 13350 / KCC S-0626 / ISP 5235).